Reading from the N-terminus, the 282-residue chain is Ribosomal RNA small subunit methyltransferase A (282 aa).

6 residues coordinate S-adenosyl-L-methionine: H11, L13, G44, E65, D90, and N106.

It belongs to the class I-like SAM-binding methyltransferase superfamily. rRNA adenine N(6)-methyltransferase family. RsmA subfamily.

It localises to the cytoplasm. It catalyses the reaction adenosine(1518)/adenosine(1519) in 16S rRNA + 4 S-adenosyl-L-methionine = N(6)-dimethyladenosine(1518)/N(6)-dimethyladenosine(1519) in 16S rRNA + 4 S-adenosyl-L-homocysteine + 4 H(+). Specifically dimethylates two adjacent adenosines (A1518 and A1519) in the loop of a conserved hairpin near the 3'-end of 16S rRNA in the 30S particle. May play a critical role in biogenesis of 30S subunits. The protein is Ribosomal RNA small subunit methyltransferase A of Synechococcus sp. (strain JA-2-3B'a(2-13)) (Cyanobacteria bacterium Yellowstone B-Prime).